Here is a 463-residue protein sequence, read N- to C-terminus: DNA polymerase subunit gamma-2, mitochondrial (463 aa).

A mitochondrion-targeting transit peptide spans 1-44; it reads MLLTLKNTGQLLVAACSKVARSLAKYHPRVNHHRHCVWCSKRGL.

In terms of assembly, heterotrimer composed of a catalytic subunit and a homodimer of accessory subunits.

The protein resides in the mitochondrion. In terms of biological role, mitochondrial polymerase processivity subunit. It regulates the polymerase and exonuclease activities promoting processive DNA synthesis. Binds to ss-DNA. The protein is DNA polymerase subunit gamma-2, mitochondrial (polg2) of Xenopus laevis (African clawed frog).